The primary structure comprises 266 residues: MTFPAGAYVLRKVFIPHGCPLIFRLLLAVICLSVPSFACPKSCHCSERNSLTVVQCSSRNLEEIPPDLPHDTVSLQLSSNHITKIPNQAFKNLPWLQELDLSRNAIETVDAGAFKGVSESLRTLDLSHNHMQGVPKEAFARLHAKISLSNNPWHCECTLQEVLRELRLDPETVNEVSCHTSDQEKYAGKPVIQVLDSGINFCNFHHKTTDVAMFVTMFGWFTMVIAYVIYYVRHNQEDARRHLEYLKSLPSSSQISKDFDTISTVL.

Residues 1–38 (MTFPAGAYVLRKVFIPHGCPLIFRLLLAVICLSVPSFA) form the signal peptide. Residues 39 to 70 (CPKSCHCSERNSLTVVQCSSRNLEEIPPDLPH) form the LRRNT domain. LRR repeat units follow at residues 71-92 (DTVS…AFKN), 95-116 (WLQE…AFKG), and 120-141 (SLRT…AFAR). In terms of domain architecture, LRRCT spans 151–204 (NPWHCECTLQEVLRELRLDPETVNEVSCHTSDQEKYAGKPVIQVLDSGINFCNF). A helical membrane pass occupies residues 211-231 (VAMFVTMFGWFTMVIAYVIYY).

The protein belongs to the LRRC3 family.

The protein resides in the membrane. This chain is Leucine-rich repeat-containing protein 3 (lrrc3), found in Danio rerio (Zebrafish).